The following is a 1330-amino-acid chain: MERPAILPSGQILSNIEVHSHRALFDIFKRFRSDDNNLYGAEFDALLGTYCSTLSLVRFLELGLSVACVCTKFPELSYVAEGTIQFEVQQPMIARDGPHPADQPVHNYMIKRLDRRSLNAAFSIAVEALGLISGENLDGTHISSAMRLRAIQQLARNVQAVLDSFERGTADQMLRVLMEKAPPLSLLAPFTLYEGRLADRVACAALVSELKRRVRDDTFFLTKHERNKDAVLDRLSDLVNCTAPSVAVARMTHADTQGRPVDGVLVTTAGVRQRLLHHVLTLADTHADVPVTYGEMVIANTNLVTALVMGKAVSNMDDVARYLLGGEPAPDDGKPVGSARVRADLVVVGDRLVFLEALEKRVYQATQVPYPLVGNLDVTFVMPLGVFKPAADRYARHAGSFAPTPGLPDPRTHPPRAVHFFNKDGVPCHVTFEHAMGTLCHPSFLDVDATLAALRQEPAEVQCAFGAYVADARPDALVGLMQRFLEEWPGMMPVRPRWAAPAAADQLLAPGNADLRLELHPAFDFFVAPEVDVPGPFAVPQVMGQVRAMPRIINGNIPLALCPVDFRDARGFELSVDRHRLAPATVAAVRGAFRDANYPMVFYIIEAVIHGSERTFCALARLVAQCIQSYWRNTHNAAFVNNFYMVMYINTYLGNGELPEDCAAVYKDLLEHVHALRRLIGEFTLPGDPLGNQPQEELNHALADATLLPPLIWDCDPILYRDGLAERLPELRVNGAHFQHILWVEMAQVNFRNVGGGLVHNRPVRNENQPLHPHHDAEWSVLSKIYYYAVVPAFSRGNCCTMGVRYDRVYQLVQTMVVPETDEEVGTDDPRHPLHPRNLVPNSLNVLFHNACVAVDADAMLILQETVTNMAERTTPLLASVAPDAGMATVATRDMRTHDGSLHHGLLMMAYQPNDATLLEGAFFYPAPVNALFACADHLGAMRDVGAEVRAAAQHVPCVPHFLGANYYATVRQPVAQHAAQSRADENTLSYALMAGYFKMSPVAFTHQLRRQLHPGFALTVVRQDRFATENVLFAEKASESYFMGQMQVARTESGGGLHLQLTQPRANVDLGVGFTAAYAAAALRAPVTDMGNLPQNLFATRGAPPMLDADADDYLRRTVNAGNRLAPVPVFGQMLPQVPAGLARGQQSVCEFIATPVSVDLAYFRRACNPRGRAAGEVHGEEGLMFDHSHADPAHPHRATANPWASQRHSYADRLYNGQYNMSGPAYSPCFKFFTPAEAVAKSRGLARLIADTGAAASPTSNGEYQFKRPVGAGELVEDPCALFQEAYPPLCASDSALLRTPLGAEEHFAQYLIRDESPLKGCFQHASA.

It belongs to the herpesviridae major capsid protein family. Homomultimer. Makes the hexons and eleven out of twelve pentons. Interacts with triplex proteins 1/TRX1 and 2/TRX2; adjacent capsomers are linked together in groups of three by triplexes, heterotrimeric complexes composed of one molecule of TRX1 and two molecules of TRX2. Interacts with scaffold protein; this interaction allows efficient MCP transport to the host nucleus. Interacts with capsid vertex component 2/CVC2. Interacts with the small capsomere-interacting protein/SCP.

Its subcellular location is the virion. It is found in the host nucleus. Self-assembles to form an icosahedral capsid with a T=16 symmetry, about 200 nm in diameter, and consisting of 150 hexons and 12 pentons (total of 162 capsomers). Hexons form the edges and faces of the capsid and are each composed of six MCP molecules. In contrast, one penton is found at each of the 12 vertices. Eleven of the pentons are MCP pentamers, while the last vertex is occupied by the portal complex. The capsid is surrounded by a layer of proteinaceous material designated the tegument which, in turn, is enclosed in an envelope of host cell-derived lipids containing virus-encoded glycoproteins. In Sus scrofa (Pig), this protein is Major capsid protein.